The sequence spans 205 residues: Thymidylate kinase (205 aa).

9 to 16 (GPEGSGKT) provides a ligand contact to ATP.

This sequence belongs to the thymidylate kinase family.

It carries out the reaction dTMP + ATP = dTDP + ADP. Functionally, phosphorylation of dTMP to form dTDP in both de novo and salvage pathways of dTTP synthesis. The protein is Thymidylate kinase of Staphylococcus aureus (strain NCTC 8325 / PS 47).